We begin with the raw amino-acid sequence, 206 residues long: MARYLGPKLKLSRREGTDLFLKSGVRAIDSKCKLETAPGQHGARKPRLSEYGTQLREKQKVRRIYGVLEKQFRNYYKEAARLKGNTGENLLQLLETRLDNVVYRMGFGSTRAEARQLVSHKSVMVNGRVVNIPSFKVSANDVVSIREKSRTQARIKAALEVAAQREKPTWVEVDAAKMEGAFKRLPERSDLSADINEQLIVELYSK.

In terms of domain architecture, S4 RNA-binding spans 96 to 156 (TRLDNVVYRM…EKSRTQARIK (61 aa)).

The protein belongs to the universal ribosomal protein uS4 family. In terms of assembly, part of the 30S ribosomal subunit. Contacts protein S5. The interaction surface between S4 and S5 is involved in control of translational fidelity.

One of the primary rRNA binding proteins, it binds directly to 16S rRNA where it nucleates assembly of the body of the 30S subunit. Functionally, with S5 and S12 plays an important role in translational accuracy. In Shewanella amazonensis (strain ATCC BAA-1098 / SB2B), this protein is Small ribosomal subunit protein uS4.